The chain runs to 154 residues: SsrA-binding protein (154 aa).

This sequence belongs to the SmpB family.

The protein localises to the cytoplasm. Required for rescue of stalled ribosomes mediated by trans-translation. Binds to transfer-messenger RNA (tmRNA), required for stable association of tmRNA with ribosomes. tmRNA and SmpB together mimic tRNA shape, replacing the anticodon stem-loop with SmpB. tmRNA is encoded by the ssrA gene; the 2 termini fold to resemble tRNA(Ala) and it encodes a 'tag peptide', a short internal open reading frame. During trans-translation Ala-aminoacylated tmRNA acts like a tRNA, entering the A-site of stalled ribosomes, displacing the stalled mRNA. The ribosome then switches to translate the ORF on the tmRNA; the nascent peptide is terminated with the 'tag peptide' encoded by the tmRNA and targeted for degradation. The ribosome is freed to recommence translation, which seems to be the essential function of trans-translation. This chain is SsrA-binding protein, found in Staphylococcus saprophyticus subsp. saprophyticus (strain ATCC 15305 / DSM 20229 / NCIMB 8711 / NCTC 7292 / S-41).